Reading from the N-terminus, the 240-residue chain is UDP-2,3-diacylglucosamine hydrolase (240 aa).

Positions 8, 10, 41, 79, and 114 each coordinate Mn(2+). 79-80 (NR) is a binding site for substrate. The substrate site is built by aspartate 122, serine 160, asparagine 164, lysine 167, and histidine 195. Positions 195 and 197 each coordinate Mn(2+).

Belongs to the LpxH family. Mn(2+) is required as a cofactor.

The protein resides in the cell inner membrane. It carries out the reaction UDP-2-N,3-O-bis[(3R)-3-hydroxytetradecanoyl]-alpha-D-glucosamine + H2O = 2-N,3-O-bis[(3R)-3-hydroxytetradecanoyl]-alpha-D-glucosaminyl 1-phosphate + UMP + 2 H(+). It functions in the pathway glycolipid biosynthesis; lipid IV(A) biosynthesis; lipid IV(A) from (3R)-3-hydroxytetradecanoyl-[acyl-carrier-protein] and UDP-N-acetyl-alpha-D-glucosamine: step 4/6. Functionally, hydrolyzes the pyrophosphate bond of UDP-2,3-diacylglucosamine to yield 2,3-diacylglucosamine 1-phosphate (lipid X) and UMP by catalyzing the attack of water at the alpha-P atom. Involved in the biosynthesis of lipid A, a phosphorylated glycolipid that anchors the lipopolysaccharide to the outer membrane of the cell. This Salmonella newport (strain SL254) protein is UDP-2,3-diacylglucosamine hydrolase.